The primary structure comprises 432 residues: Protein RETICULATA, chloroplastic (432 aa).

The transit peptide at 1-47 directs the protein to the chloroplast; the sequence is MAGCAMNLQFSSVVKVRNEISSFGICNRDFVFRDLAKAMKVPVLRIR. The interval 109 to 140 is disordered; sequence GNVGDGFNGSDGNGGGGGGGNGGEGDGEGEDY. Residues 111–132 are compositionally biased toward gly residues; sequence VGDGFNGSDGNGGGGGGGNGGE. A run of 2 helical transmembrane segments spans residues 249–269 and 322–342; these read LYVA…GMLA and IMYG…ANLI.

It belongs to the RETICULATA family. As to expression, highly expressed in the vasculature of developing leaf primordia, margins of fully expanded leaves, hydathodes of rosette of cauline leaves, basal region of the lamina, stipules, root tips, stamens and in the abscission zone of the funiculus.

It is found in the plastid. The protein resides in the chloroplast membrane. Functionally, may play a role in leaf development. Required for leaf mesophyll cell division in the early stages of leaf organogenesis. Acts in a developmental pathway that involves PPT1/CUE1 but does not include ASE2/DOV1. This is Protein RETICULATA, chloroplastic from Arabidopsis thaliana (Mouse-ear cress).